Here is a 331-residue protein sequence, read N- to C-terminus: MSFFAVACSAPRSSMLLTGLNSSFSDMHRSPLFVFPVTISSRSVKRFAAVSSDSVLDPESKNQTRSRRKNKEAVTPIAETENNEKFPTKVPRKSKRGRRSEADAVEDYVRSSLERTFSTIKEQNPEVFENKEKANFIKDRGVDEEEEEEEEMVVEEEDPDWPVDTDVGWGIKASEYFDTHPIKNVVGDDGSEIDWEGEIDDSWVKEINCLEWESFAFHPSPLVVLVFERYKRASDNWKTLKELEKAIKVYWDAKDRLPPRAVKIDLNIETDLAYALKAKECPQILFLRGNRILYREKDFRTADELVHMIAHFYYKAKRPSCVDKANVTPYC.

The N-terminal 59 residues, 1–59 (MSFFAVACSAPRSSMLLTGLNSSFSDMHRSPLFVFPVTISSRSVKRFAAVSSDSVLDPE), are a transit peptide targeting the chloroplast. 2 disordered regions span residues 52–105 (SDSV…ADAV) and 141–160 (GVDEEEEEEEEMVVEEEDPD). Residues 142–160 (VDEEEEEEEEMVVEEEDPD) show a composition bias toward acidic residues.

Component of the transcriptionally active chromosome (TAC) complexes. Interacts with FSD2 and PRDA1. Interacts with FSD3 and CITRX/TRXZ. Binds to PTAC12/HMR/PAP5. As to expression, expressed in leaves, shoots, stems, cauline leaves, flower buds, flowers and siliques.

Its subcellular location is the plastid. The protein localises to the chloroplast. It is found in the chloroplast stroma. The protein resides in the chloroplast nucleoid. It localises to the nucleus. In terms of biological role, plays an essential role in early steps of chloroplast development. Involved in the regulation of plastid gene expression. May positively regulate plastid-encoded RNA polymerase (PEP) activity through binding to FSD3 and CITRX/TRXZ. Involved in redox-mediated regulation of chloroplast development. Possesses disulfide reductase activity in vitro. Required for the proper function of the plastid transcriptional machinery and protein accumulation in thylakoid membranes. May function as molecular chaperone to ensure proper organization of the nucleoids in chloroplasts. May mediate some aspect of thylakoid structure or function that controls non-photochemical quenching (NPQ). Participates in the early light signaling events of photobody biogenesis in chloroplasts. May mediate the degradation of two repressors of chloroplast biogenesis, PIF1 and PIF3 in nucleus. Collaboratively with PTAC12/HMR/PAP5, involved in the regulation of thermoresponsive responses via the stabilization of PIF4 in the daytime to initiate thermomorphogenesis. In Arabidopsis thaliana (Mouse-ear cress), this protein is Thioredoxin-like fold domain-containing protein MRL7, chloroplastic.